We begin with the raw amino-acid sequence, 338 residues long: Mitochondrial genome maintenance exonuclease 1 (338 aa).

Residues 1–64 constitute a mitochondrion transit peptide; the sequence is MKLPLTFCRL…RSVLSRGPAQ (64 aa). Active-site residues include Asp-235, Asp-248, and Lys-250.

The protein belongs to the MGME1 family.

The protein resides in the mitochondrion. Metal-dependent single-stranded DNA (ssDNA) exonuclease involved in mitochondrial genome maintenance. Has preference for 5'-3' exonuclease activity but is also capable of endonuclease activity on linear substrates. Necessary for maintenance of proper 7S DNA levels. Probably involved in mitochondrial DNA (mtDNA) repair, possibly via the processing of displaced DNA containing Okazaki fragments during RNA-primed DNA synthesis on the lagging strand or via processing of DNA flaps during long-patch base excision repair. Specifically binds 5-hydroxymethylcytosine (5hmC)-containing DNA in stem cells. This Mus musculus (Mouse) protein is Mitochondrial genome maintenance exonuclease 1 (Mgme1).